Here is a 457-residue protein sequence, read N- to C-terminus: uncharacterized protein (457 aa).

Residues 5–63 (PVEEGQKFPLTIRRMGINGEGIGYFKKAVVFVPGAITGEEVVVEAVKVRDRFTEAKLNK) enclose the TRAM domain. 4 residues coordinate [4Fe-4S] cluster: Cys-76, Cys-82, Cys-85, and Cys-166. 4 residues coordinate S-adenosyl-L-methionine: Gln-290, Tyr-319, Asp-340, and Asp-388. Catalysis depends on Cys-415, which acts as the Nucleophile.

The protein belongs to the class I-like SAM-binding methyltransferase superfamily. RNA M5U methyltransferase family.

This is an uncharacterized protein from Listeria innocua serovar 6a (strain ATCC BAA-680 / CLIP 11262).